We begin with the raw amino-acid sequence, 501 residues long: Lysine--tRNA ligase (501 aa).

Residues Glu-404 and Glu-411 each contribute to the Mg(2+) site.

This sequence belongs to the class-II aminoacyl-tRNA synthetase family. Homodimer. Mg(2+) serves as cofactor.

The protein localises to the cytoplasm. It catalyses the reaction tRNA(Lys) + L-lysine + ATP = L-lysyl-tRNA(Lys) + AMP + diphosphate. This chain is Lysine--tRNA ligase, found in Campylobacter jejuni (strain RM1221).